We begin with the raw amino-acid sequence, 284 residues long: Tropomyosin-1 (284 aa).

Residues 1–284 adopt a coiled-coil conformation; the sequence is MDAIKKKMLA…DSTFAELAGY (284 aa). The interval 103 to 131 is disordered; the sequence is EERLQSATEKLEEASKAADESERGRKVLE.

Belongs to the tropomyosin family. As to quaternary structure, homodimer.

In terms of biological role, tropomyosin, in association with the troponin complex, plays a central role in the calcium dependent regulation of muscle contraction. The polypeptide is Tropomyosin-1 (Biomphalaria glabrata (Bloodfluke planorb)).